The sequence spans 341 residues: Spindle assembly checkpoint protein BUB3 (341 aa).

7 WD repeats span residues 9 to 48 (APKD…KNVD), 54 to 96 (RYKH…QALT), 97 to 137 (NNEA…DGVI), 144 to 185 (SNNT…DDNG), 191 to 233 (GLKY…YNSS), 249 to 288 (NLAY…KIKN), and 292 to 329 (FNED…IELN).

This sequence belongs to the WD repeat BUB3 family. In terms of assembly, component of the mitotic checkpoint complex (MCC) which consists of MAD2, MAD3, BUB3 and CDC20. Part of complex consisting of MAD1, BUB1 and BUB3 after activation of spindle checkpoint. Part of the BUB1-BUB3 complex, composed of BUB1 and BUB3. Interacts with SPC105 (via phosphorylated MELT motifs); the interaction is direct and occurs when part of the BUB1-BUB3 complex. Interacts with MAD3; the interaction is direct. Post-translationally, phosphorylated by BUB1.

The protein localises to the nucleus. The protein resides in the chromosome. It is found in the centromere. Its subcellular location is the kinetochore. Involved in mitotic spindle assembly checkpoint signaling, a process that delays anaphase until chromosomes are bioriented on the spindle, and in the repair of incorrect mitotic kinetochore-spindle microtubule attachments. Component of the mitotic checkpoint complex (MCC) which inhibits the ubiquitin ligase activity of the anaphase promoting complex/cyclosome (APC/C) by preventing its activation by CDC20. In Saccharomyces cerevisiae (strain ATCC 204508 / S288c) (Baker's yeast), this protein is Spindle assembly checkpoint protein BUB3 (BUB3).